The following is a 439-amino-acid chain: GTPase Der (439 aa).

2 consecutive EngA-type G domains span residues proline 4–glutamate 168 and isoleucine 177–threonine 352. GTP contacts are provided by residues glycine 10–serine 17, aspartate 57–isoleucine 61, asparagine 120–aspartate 123, glycine 183–serine 190, aspartate 230–leucine 234, and asparagine 295–aspartate 298. The region spanning lysine 353 to lysine 437 is the KH-like domain.

The protein belongs to the TRAFAC class TrmE-Era-EngA-EngB-Septin-like GTPase superfamily. EngA (Der) GTPase family. In terms of assembly, associates with the 50S ribosomal subunit.

GTPase that plays an essential role in the late steps of ribosome biogenesis. This chain is GTPase Der, found in Clostridium botulinum (strain Kyoto / Type A2).